Here is a 79-residue protein sequence, read N- to C-terminus: DNA-directed RNA polymerase subunit omega (79 aa).

It belongs to the RNA polymerase subunit omega family. In terms of assembly, in cyanobacteria the RNAP catalytic core is composed of 2 alpha, 1 beta, 1 beta', 1 gamma and 1 omega subunit. When a sigma factor is associated with the core the holoenzyme is formed, which can initiate transcription.

It catalyses the reaction RNA(n) + a ribonucleoside 5'-triphosphate = RNA(n+1) + diphosphate. Functionally, promotes RNA polymerase assembly. Latches the N- and C-terminal regions of the beta' subunit thereby facilitating its interaction with the beta and alpha subunits. The chain is DNA-directed RNA polymerase subunit omega from Synechococcus sp. (strain JA-3-3Ab) (Cyanobacteria bacterium Yellowstone A-Prime).